Reading from the N-terminus, the 487-residue chain is UPF0276 protein SAV_2218 (487 aa).

The segment at 1–285 is UPF0276; the sequence is MVEEGTMERL…LGAIRKTLEK (285 aa). The interval 286–487 is unknown; sequence AGTRAGASAG…RATRRVLLRR (202 aa). The segment at 319–348 is disordered; sequence AGPRRGGADAQAAPRAAGTEALSAASTSTP. Low complexity predominate over residues 326–348; it reads ADAQAAPRAAGTEALSAASTSTP.

It in the N-terminal section; belongs to the UPF0276 family.

This chain is UPF0276 protein SAV_2218, found in Streptomyces avermitilis (strain ATCC 31267 / DSM 46492 / JCM 5070 / NBRC 14893 / NCIMB 12804 / NRRL 8165 / MA-4680).